The chain runs to 136 residues: Small integral membrane protein 23 (136 aa).

The Cytoplasmic segment spans residues 1 to 31 (MTIQKTGCRGREAAEVVEQRRRSHHCDDRKQ). The chain crosses the membrane as a helical; Signal-anchor for type II membrane protein span at residues 32 to 52 (TLLALLILVLYLGMGISGSSW). Over 53 to 136 (EVSGQTKDCN…DLRPEDPCFT (84 aa)) the chain is Extracellular. Residues 92–124 (LKINLHGFLEKLEKEVRELEQLVRDLEFWLDAL) are a coiled coil.

Its subcellular location is the membrane. The polypeptide is Small integral membrane protein 23 (Smim23) (Mus musculus (Mouse)).